We begin with the raw amino-acid sequence, 663 residues long: Pyoverdine export ATP-binding/permease protein PvdT (663 aa).

Residues 11–250 (IELRDIRKRY…PSAGVERHLQ (240 aa)) enclose the ABC transporter domain. Residue 48-55 (GASGSGKS) participates in ATP binding. Helical transmembrane passes span 292–312 (ALTL…LAVG), 545–565 (IAAI…LMTV), 598–618 (VVGG…LLLG), and 626–646 (LSAI…FGFM).

The protein belongs to the ABC transporter superfamily. Macrolide exporter (TC 3.A.1.122) family. In terms of assembly, part of the tripartite efflux system PvdRT-OpmQ, which is composed of an inner membrane component with both ATPase and permease domains, PvdT, a periplasmic membrane fusion protein, PvdR, and an outer membrane component, OpmQ.

It is found in the cell inner membrane. Part of the tripartite efflux system PvdRT-OpmQ required for the secretion into the extracellular milieu of the siderophore pyoverdine (PVD), which is involved in iron acquisition. This subunit binds PVD and drives its secretion by hydrolyzing ATP. The system is responsible for export of newly synthesized PVD after the final steps of biosynthesis have taken place in the periplasm. It is also responsible for recycling of PVD after internalization of ferri-PVD into the periplasm by the outer-membrane receptor FpvA and release of iron from PVD, thus making PVD available for new cycles of iron uptake. In addition, can expel unwanted metals complexed with PVD from the periplasm into the extracellular medium. The polypeptide is Pyoverdine export ATP-binding/permease protein PvdT (Pseudomonas aeruginosa (strain ATCC 15692 / DSM 22644 / CIP 104116 / JCM 14847 / LMG 12228 / 1C / PRS 101 / PAO1)).